We begin with the raw amino-acid sequence, 886 residues long: Alanine--tRNA ligase (886 aa).

The Zn(2+) site is built by histidine 570, histidine 574, cysteine 672, and histidine 676.

This sequence belongs to the class-II aminoacyl-tRNA synthetase family. The cofactor is Zn(2+).

Its subcellular location is the cytoplasm. It catalyses the reaction tRNA(Ala) + L-alanine + ATP = L-alanyl-tRNA(Ala) + AMP + diphosphate. Functionally, catalyzes the attachment of alanine to tRNA(Ala) in a two-step reaction: alanine is first activated by ATP to form Ala-AMP and then transferred to the acceptor end of tRNA(Ala). Also edits incorrectly charged Ser-tRNA(Ala) and Gly-tRNA(Ala) via its editing domain. The polypeptide is Alanine--tRNA ligase (Acidothermus cellulolyticus (strain ATCC 43068 / DSM 8971 / 11B)).